The sequence spans 340 residues: GTP 3',8-cyclase (340 aa).

One can recognise a Radical SAM core domain in the interval 20 to 246 (RFQRQYTYLR…PKAVNDGPAK (227 aa)). Residue Arg29 participates in GTP binding. [4Fe-4S] cluster contacts are provided by Cys36 and Cys40. Tyr42 lines the S-adenosyl-L-methionine pocket. Cys43 contacts [4Fe-4S] cluster. GTP is bound at residue Arg79. Residue Gly83 coordinates S-adenosyl-L-methionine. Position 110 (Thr110) interacts with GTP. Residue Ser134 coordinates S-adenosyl-L-methionine. Residue Lys171 coordinates GTP. Met205 is a binding site for S-adenosyl-L-methionine. [4Fe-4S] cluster-binding residues include Cys268 and Cys271. Position 273-275 (273-275 (RLR)) interacts with GTP. Residue Cys285 coordinates [4Fe-4S] cluster.

This sequence belongs to the radical SAM superfamily. MoaA family. In terms of assembly, monomer and homodimer. [4Fe-4S] cluster serves as cofactor.

The catalysed reaction is GTP + AH2 + S-adenosyl-L-methionine = (8S)-3',8-cyclo-7,8-dihydroguanosine 5'-triphosphate + 5'-deoxyadenosine + L-methionine + A + H(+). The protein operates within cofactor biosynthesis; molybdopterin biosynthesis. Catalyzes the cyclization of GTP to (8S)-3',8-cyclo-7,8-dihydroguanosine 5'-triphosphate. This chain is GTP 3',8-cyclase, found in Haemophilus ducreyi (strain 35000HP / ATCC 700724).